The chain runs to 405 residues: Cystathionine gamma-lyase (405 aa).

Substrate is bound by residues arginine 62, tyrosine 114, and arginine 119. N6-(pyridoxal phosphate)lysine is present on lysine 212. Glutamate 339 is a substrate binding site.

The protein belongs to the trans-sulfuration enzymes family. As to quaternary structure, homotetramer. Interacts with CALM in a calcium-dependent manner. The cofactor is pyridoxal 5'-phosphate.

The protein resides in the cytoplasm. The catalysed reaction is L,L-cystathionine + H2O = 2-oxobutanoate + L-cysteine + NH4(+). It carries out the reaction L-cysteine + H2O = hydrogen sulfide + pyruvate + NH4(+) + H(+). The enzyme catalyses L-homocysteine + H2O = 2-oxobutanoate + hydrogen sulfide + NH4(+) + H(+). It catalyses the reaction L-homoserine = 2-oxobutanoate + NH4(+). The catalysed reaction is L-selenocystathionine + H2O = L-selenocysteine + 2-oxobutanoate + NH4(+). Its pathway is amino-acid biosynthesis; L-cysteine biosynthesis; L-cysteine from L-homocysteine and L-serine: step 2/2. In terms of biological role, catalyzes the last step in the trans-sulfuration pathway from L-methionine to L-cysteine in a pyridoxal-5'-phosphate (PLP)-dependent manner, which consists on cleaving the L,L-cystathionine molecule into L-cysteine, ammonia and 2-oxobutanoate. Part of the L-cysteine derived from the trans-sulfuration pathway is utilized for biosynthesis of the ubiquitous antioxidant glutathione. Besides its role in the conversion of L-cystathionine into L-cysteine, it utilizes L-cysteine and L-homocysteine as substrates (at much lower rates than L,L-cystathionine) to produce hydrogen sulfide (H2S). In vitro, it converts two L-cysteine molecules into lanthionine and H2S, and two L-homocysteine molecules to homolanthionine and H2S, which can be particularly relevant under conditions of severe hyperhomocysteinemia. Lanthionine and homolanthionine are structural homologs of L,L-cystathionine that differ by the absence or presence of an extra methylene group, respectively. Acts as a cysteine-protein sulfhydrase by mediating sulfhydration of target proteins: sulfhydration consists of converting -SH groups into -SSH on specific cysteine residues of target proteins such as GAPDH, PTPN1 and NF-kappa-B subunit RELA, thereby regulating their function. By generating the gasotransmitter H2S, it participates in a number of physiological processes such as vasodilation, bone protection, and inflammation. Plays an essential role in myogenesis by contributing to the biogenesis of H2S in skeletal muscle tissue. Can also accept homoserine as substrate. Catalyzes the elimination of selenocystathionine (which can be derived from the diet) to yield selenocysteine, ammonia and 2-oxobutanoate. The polypeptide is Cystathionine gamma-lyase (CTH) (Macaca fascicularis (Crab-eating macaque)).